The chain runs to 255 residues: Spectinomycin 9-adenylyltransferase (255 aa).

The enzyme catalyses spectinomycin + ATP = 9-O-adenylylspectinomycin + diphosphate. Its function is as follows. Mediates bacterial resistance to the antibiotic spectinomycin but not streptomycin. The chain is Spectinomycin 9-adenylyltransferase from Enterococcus faecalis (Streptococcus faecalis).